We begin with the raw amino-acid sequence, 532 residues long: Pentatricopeptide repeat-containing protein At5g66500, mitochondrial (532 aa).

A mitochondrion-targeting transit peptide spans Met-1 to Phe-33. PPR repeat units follow at residues Asp-48–Leu-82, Ser-83–Thr-117, Gly-118–Lys-148, Asp-149–Ile-183, Ser-184–Leu-218, Thr-223–His-248, Asp-250–Asn-280, Val-281–Ser-314, Asp-315–Lys-345, Ser-346–Val-380, Asn-383–Lys-413, and Gly-419–Ser-453. The segment at Ile-458–Ile-532 is type E motif; degenerate.

This sequence belongs to the PPR family. PCMP-E subfamily.

The protein resides in the mitochondrion. The sequence is that of Pentatricopeptide repeat-containing protein At5g66500, mitochondrial (PCMP-E38) from Arabidopsis thaliana (Mouse-ear cress).